The sequence spans 200 residues: TATA-box-binding protein 2 (200 aa).

2 tandem repeats follow at residues 25–101 and 115–192.

It belongs to the TBP family. Belongs to the TFIID complex together with the TBP-associated factors (TAFs). Binds DNA as monomer.

Its subcellular location is the nucleus. In terms of biological role, general transcription factor that functions at the core of the DNA-binding multiprotein factor TFIID. Binding of TFIID to the TATA box is the initial transcriptional step of the pre-initiation complex (PIC), playing a role in the activation of eukaryotic genes transcribed by RNA polymerase II. This Zea mays (Maize) protein is TATA-box-binding protein 2 (TBP2).